The chain runs to 283 residues: Probable protein phosphatase 2C 58 (283 aa).

The region spanning 35–282 (THGFHCVKGK…DDISCIVVKF (248 aa)) is the PPM-type phosphatase domain. Residues D72, G73, D234, and D273 each contribute to the Mn(2+) site.

It belongs to the PP2C family. Requires Mg(2+) as cofactor. Mn(2+) is required as a cofactor.

The enzyme catalyses O-phospho-L-seryl-[protein] + H2O = L-seryl-[protein] + phosphate. The catalysed reaction is O-phospho-L-threonyl-[protein] + H2O = L-threonyl-[protein] + phosphate. The protein is Probable protein phosphatase 2C 58 of Arabidopsis thaliana (Mouse-ear cress).